The sequence spans 460 residues: MAADKIDTIVSLSKRRGFVFPCSEIYGGQRAAWDYGPLGVELKENLKRQWWRYMVTSREDVVGLDSSVILAPEVWVASGHVATFTDPLTECTSCHKRFRADHLEEAYEEKKGHAPENGLADLNCPNCGNKGTFTEPKQFSGLLSTHLGPTQDSGSVAYLRPETAQGIFTNFAQVQTTSRRKPPFGIAQMGKSFRNEITPGNFIFRTREFEQMEMEFFVKPGEDEKWQEYWMEQRWNWYTGLGLREENMRWYEHPAEKLSHYSKRTADIEYRFSFGGSEWGELEGVANRTDYDLSSHAKASGQDLSYYDQEAQERWTPYVIEPAAGVGRAMLAFLLDAYIEDEAPNAKGKLEKRTVLRLDPRLSPVKVAVLPLSRNPELSPKAKGLAQALRQNWNIEFDDAGAIGRRYRRQDEIGTPFCVTVDFDTLDDNAVTVRERDTMKQERVSLDQIEGYLASRLVGC.

Residues Arg-99 and Glu-162 each coordinate substrate. Residues 194–196 (RNE), 204–209 (FRTREF), 281–282 (EL), and 325–328 (GVGR) contribute to the ATP site. 209 to 213 (FEQME) is a binding site for substrate. Substrate is bound at residue 321–325 (EPAAG).

The protein belongs to the class-II aminoacyl-tRNA synthetase family. As to quaternary structure, homodimer.

Its subcellular location is the cytoplasm. The catalysed reaction is tRNA(Gly) + glycine + ATP = glycyl-tRNA(Gly) + AMP + diphosphate. In terms of biological role, catalyzes the attachment of glycine to tRNA(Gly). The sequence is that of Glycine--tRNA ligase from Streptomyces coelicolor (strain ATCC BAA-471 / A3(2) / M145).